A 258-amino-acid polypeptide reads, in one-letter code: Small ribosomal subunit protein uS2 (258 aa).

The protein belongs to the universal ribosomal protein uS2 family.

The protein is Small ribosomal subunit protein uS2 of Granulibacter bethesdensis (strain ATCC BAA-1260 / CGDNIH1).